A 533-amino-acid polypeptide reads, in one-letter code: Hydroxylamine reductase (533 aa).

Positions 3, 6, 15, and 21 each coordinate [4Fe-4S] cluster. Hybrid [4Fe-2O-2S] cluster contacts are provided by histidine 234, glutamate 258, cysteine 302, cysteine 389, cysteine 417, cysteine 442, glutamate 476, and lysine 478. Residue cysteine 389 is modified to Cysteine persulfide.

Belongs to the HCP family. [4Fe-4S] cluster serves as cofactor. Requires hybrid [4Fe-2O-2S] cluster as cofactor.

It localises to the cytoplasm. It catalyses the reaction A + NH4(+) + H2O = hydroxylamine + AH2 + H(+). Its function is as follows. Catalyzes the reduction of hydroxylamine to form NH(3) and H(2)O. The chain is Hydroxylamine reductase from Maridesulfovibrio salexigens (strain ATCC 14822 / DSM 2638 / NCIMB 8403 / VKM B-1763) (Desulfovibrio salexigens).